Here is a 110-residue protein sequence, read N- to C-terminus: Parvalbumin alpha (110 aa).

2 consecutive EF-hand domains span residues 39-74 and 78-110; these read KGPD…FTPN and LSVK…VSES. Ca(2+)-binding residues include aspartate 52, aspartate 54, serine 56, phenylalanine 58, glutamate 60, glutamate 63, aspartate 91, aspartate 93, aspartate 95, lysine 97, and glutamate 102.

Belongs to the parvalbumin family.

Functionally, in muscle, parvalbumin is thought to be involved in relaxation after contraction. It binds two calcium ions. This Aquarana catesbeiana (American bullfrog) protein is Parvalbumin alpha.